Consider the following 426-residue polypeptide: UDP-N-acetylglucosamine 1-carboxyvinyltransferase (426 aa).

22–23 provides a ligand contact to phosphoenolpyruvate; sequence KN. Arg93 contributes to the UDP-N-acetyl-alpha-D-glucosamine binding site. The active-site Proton donor is the Asp117. Positions 312 and 334 each coordinate UDP-N-acetyl-alpha-D-glucosamine.

The protein belongs to the EPSP synthase family. MurA subfamily.

The protein resides in the cytoplasm. The enzyme catalyses phosphoenolpyruvate + UDP-N-acetyl-alpha-D-glucosamine = UDP-N-acetyl-3-O-(1-carboxyvinyl)-alpha-D-glucosamine + phosphate. It functions in the pathway cell wall biogenesis; peptidoglycan biosynthesis. Its function is as follows. Cell wall formation. Adds enolpyruvyl to UDP-N-acetylglucosamine. In Treponema denticola (strain ATCC 35405 / DSM 14222 / CIP 103919 / JCM 8153 / KCTC 15104), this protein is UDP-N-acetylglucosamine 1-carboxyvinyltransferase.